The primary structure comprises 214 residues: Osteoclast-stimulating factor 1 (214 aa).

Ser-2 bears the N-acetylserine mark. The SH3 domain occupies 12–71 (GQVKVFRALYTFEPRTPDELYFEEGDIIYITDMSDTNWWKGTCKGRTGLIPSNYVAEQAE). ANK repeat units follow at residues 72–101 (SIDNPLHEAAKRGNLSWLRECLDNRVGVNG), 105–135 (AGSTALYWACHGGHRDIVEMLFTQPNIELNQ), and 139–168 (LGDTALHAAAWKGYADIVQLLLEKGARTDL). Ser-202 and Ser-213 each carry phosphoserine.

In terms of assembly, interacts with SRC and SMN1. Interacts with FASLG.

It localises to the cytoplasm. Functionally, induces bone resorption, acting probably through a signaling cascade which results in the secretion of factor(s) enhancing osteoclast formation and activity. This chain is Osteoclast-stimulating factor 1 (OSTF1), found in Bos taurus (Bovine).